Reading from the N-terminus, the 203-residue chain is Thymidylate kinase (203 aa).

ATP is bound at residue 7-14; sequence GPDGSGKS.

It belongs to the thymidylate kinase family.

The catalysed reaction is dTMP + ATP = dTDP + ADP. In terms of biological role, phosphorylation of dTMP to form dTDP in both de novo and salvage pathways of dTTP synthesis. The protein is Thymidylate kinase of Finegoldia magna (strain ATCC 29328 / DSM 20472 / WAL 2508) (Peptostreptococcus magnus).